Reading from the N-terminus, the 212-residue chain is 3-isopropylmalate dehydratase small subunit (212 aa).

This sequence belongs to the LeuD family. LeuD type 1 subfamily. In terms of assembly, heterodimer of LeuC and LeuD.

The catalysed reaction is (2R,3S)-3-isopropylmalate = (2S)-2-isopropylmalate. It functions in the pathway amino-acid biosynthesis; L-leucine biosynthesis; L-leucine from 3-methyl-2-oxobutanoate: step 2/4. Catalyzes the isomerization between 2-isopropylmalate and 3-isopropylmalate, via the formation of 2-isopropylmaleate. In Methylococcus capsulatus (strain ATCC 33009 / NCIMB 11132 / Bath), this protein is 3-isopropylmalate dehydratase small subunit.